The chain runs to 839 residues: Taste receptor type 1 member 2 (839 aa).

Residues 1–19 (MGPRAKTICSLFFLLWVLA) form the signal peptide. Residues 20 to 566 (EPAENSDFYL…VFLEWHEAPT (547 aa)) lie on the Extracellular side of the membrane. N-linked (GlcNAc...) asparagine glycosylation is found at asparagine 84, asparagine 248, asparagine 292, asparagine 312, asparagine 368, asparagine 407, asparagine 428, asparagine 487, and asparagine 527. Residues 567–587 (IAVALLAALGFLSTLAILVIF) traverse the membrane as a helical segment. At 588–602 (WRHFQTPIVRSAGGP) the chain is on the cytoplasmic side. Residues 603 to 623 (MCFLMLTLLLVAYMVVPVYVG) traverse the membrane as a helical segment. Over 624 to 635 (PPKVSTCLCRQA) the chain is Extracellular. The helical transmembrane segment at 636–656 (LFPLCFTICISCIAVRSFQIV) threads the bilayer. The Cytoplasmic segment spans residues 657-681 (CAFKMASRFPRAYSYWVRYQGPYVS). Residues 682–702 (MAFITVLKMVIVVIGMLATGL) form a helical membrane-spanning segment. Residues 703-727 (SPTTRTDPDDPKITIVSCNPNYRNS) are Extracellular-facing. Residues 728-748 (LLFNTSLDLLLSVVGFSFAYM) traverse the membrane as a helical segment. Residues 749 to 760 (GKELPTNYNEAK) lie on the Cytoplasmic side of the membrane. A helical membrane pass occupies residues 761 to 781 (FITLSMTFYFTSSVSLCTFMS). Residues 782-784 (AYS) are Extracellular-facing. A helical transmembrane segment spans residues 785 to 805 (GVLVTIVDLLVTVLNLLAISL). Topologically, residues 806–839 (GYFGPKCYMILFYPERNTSAYFNSMIQGYTMRRD) are cytoplasmic.

The protein belongs to the G-protein coupled receptor 3 family. TAS1R subfamily. As to quaternary structure, forms heterodimers with TAS1R3.

It is found in the cell membrane. In terms of biological role, putative taste receptor. TAS1R2/TAS1R3 recognizes diverse natural and synthetic sweeteners. The chain is Taste receptor type 1 member 2 (TAS1R2) from Pan troglodytes (Chimpanzee).